A 321-amino-acid polypeptide reads, in one-letter code: Pirin-like protein 2 (321 aa).

Fe cation is bound by residues histidine 88, histidine 90, histidine 132, and glutamate 134.

Belongs to the pirin family. In terms of assembly, interacts with RD21A, RD21B and XCP2.

It is found in the cytoplasm. Its subcellular location is the cytosol. The protein localises to the nucleus. Functionally, involved in susceptibility to the bacterial plant pathogen Ralstonia solanacearum. Stabilizes the xylem cysteine protease XCP2 by blocking its autolysis. This chain is Pirin-like protein 2, found in Arabidopsis thaliana (Mouse-ear cress).